The primary structure comprises 313 residues: MSFQHTTVLLQETVAALAPQRGGCYLDGTFGGGGHSRLLLEQCAPTGRVIGLDRDADAIANGQALVAQMAGRLTLVKAPFAQVAEVLQQLEIAALDGAMLDLGVSSHQLDTAERGFSFIRSGPLDMRMDGDSTTPTAAALLNTLDADALADIFFHYGEERHARRIARMVVKVRQQHPFTTTTDLAERIAHMTPGYSRIHPATRVFQGLRIAVNEELQQLEQALSVLIGLLKPGGHLAVISFHSLEDRIVKRLFRDAAKPPEDPVLRGLPIAQAQRPKATLKLVHNKPLTPSEAEIEQNPRARSAKLRVAQKLA.

Residues glycine 33–histidine 35, aspartate 53, phenylalanine 80, aspartate 101, and glutamine 108 each bind S-adenosyl-L-methionine. The segment at leucine 282–alanine 313 is disordered.

Belongs to the methyltransferase superfamily. RsmH family.

Its subcellular location is the cytoplasm. The catalysed reaction is cytidine(1402) in 16S rRNA + S-adenosyl-L-methionine = N(4)-methylcytidine(1402) in 16S rRNA + S-adenosyl-L-homocysteine + H(+). Functionally, specifically methylates the N4 position of cytidine in position 1402 (C1402) of 16S rRNA. This is Ribosomal RNA small subunit methyltransferase H from Magnetococcus marinus (strain ATCC BAA-1437 / JCM 17883 / MC-1).